A 148-amino-acid chain; its full sequence is UPF0179 protein VNG_1401C (148 aa).

Belongs to the UPF0179 family.

This is UPF0179 protein VNG_1401C from Halobacterium salinarum (strain ATCC 700922 / JCM 11081 / NRC-1) (Halobacterium halobium).